A 621-amino-acid chain; its full sequence is Cystathionine gamma-synthase (621 aa).

The residue at position 429 (K429) is an N6-(pyridoxal phosphate)lysine.

Belongs to the trans-sulfuration enzymes family. MET7 subfamily. In terms of assembly, both met-3 and met-7 are required to form a functional cystathionine gamma-synthase. Pyridoxal 5'-phosphate is required as a cofactor.

It catalyses the reaction O-succinyl-L-homoserine + L-cysteine = L,L-cystathionine + succinate + H(+). Its pathway is amino-acid biosynthesis; L-methionine biosynthesis via de novo pathway; L-cystathionine from O-succinyl-L-homoserine: step 1/1. Functionally, catalyzes the formation of L-cystathionine from O-succinyl-L-homoserine (OSHS) and L-cysteine, via a gamma-replacement reaction. In the absence of thiol, catalyzes gamma-elimination to form 2-oxobutanoate, succinate and ammonia. This chain is Cystathionine gamma-synthase (met-7), found in Neurospora crassa (strain ATCC 24698 / 74-OR23-1A / CBS 708.71 / DSM 1257 / FGSC 987).